Here is a 206-residue protein sequence, read N- to C-terminus: Histidine biosynthesis bifunctional protein HisIE (206 aa).

Residues 1–114 form a phosphoribosyl-AMP cyclohydrolase region; the sequence is MLKKINFIDI…FQVPSENLFF (114 aa). The segment at 115 to 206 is phosphoribosyl-ATP pyrophosphohydrolase; it reads LHDLDCMLKF…NLKMRSNKQV (92 aa).

The protein in the N-terminal section; belongs to the PRA-CH family. In the C-terminal section; belongs to the PRA-PH family.

The protein resides in the cytoplasm. It carries out the reaction 1-(5-phospho-beta-D-ribosyl)-ATP + H2O = 1-(5-phospho-beta-D-ribosyl)-5'-AMP + diphosphate + H(+). The catalysed reaction is 1-(5-phospho-beta-D-ribosyl)-5'-AMP + H2O = 1-(5-phospho-beta-D-ribosyl)-5-[(5-phospho-beta-D-ribosylamino)methylideneamino]imidazole-4-carboxamide. It functions in the pathway amino-acid biosynthesis; L-histidine biosynthesis; L-histidine from 5-phospho-alpha-D-ribose 1-diphosphate: step 2/9. The protein operates within amino-acid biosynthesis; L-histidine biosynthesis; L-histidine from 5-phospho-alpha-D-ribose 1-diphosphate: step 3/9. In Buchnera aphidicola subsp. Baizongia pistaciae (strain Bp), this protein is Histidine biosynthesis bifunctional protein HisIE (hisI).